The primary structure comprises 363 residues: Isopentenyl-diphosphate delta-isomerase (363 aa).

7 to 8 contributes to the substrate binding site; the sequence is RK. FMN is bound by residues 71 to 73, Ser101, and Asn130; that span reads AMT. Gln160 is a binding site for substrate. Glu161 contacts Mg(2+). FMN-binding positions include Lys192, Ser217, Thr222, 270–272, and 291–292; these read GIR and AG.

Belongs to the IPP isomerase type 2 family. Homooctamer. Dimer of tetramers. FMN serves as cofactor. The cofactor is NADPH. Requires Mg(2+) as cofactor.

It is found in the cytoplasm. The enzyme catalyses isopentenyl diphosphate = dimethylallyl diphosphate. In terms of biological role, involved in the biosynthesis of isoprenoids. Catalyzes the 1,3-allylic rearrangement of the homoallylic substrate isopentenyl (IPP) to its allylic isomer, dimethylallyl diphosphate (DMAPP). The polypeptide is Isopentenyl-diphosphate delta-isomerase (Symbiobacterium thermophilum (strain DSM 24528 / JCM 14929 / IAM 14863 / T)).